The primary structure comprises 136 residues: Secreted RxLR effector protein 15 (136 aa).

A signal peptide spans 1-22 (MRGHSALMMAVVTLAAVSSGAA). A RxLR motif is present at residues 47–50 (RLLR).

This sequence belongs to the RxLR effector family.

It localises to the secreted. The protein localises to the host nucleus. Its subcellular location is the host cytoplasm. Effector that completely suppresses the host cell death induced by cell death-inducing proteins. This chain is Secreted RxLR effector protein 15, found in Plasmopara viticola (Downy mildew of grapevine).